A 379-amino-acid chain; its full sequence is Transcription factor bHLH122 (379 aa).

Residues 1 to 17 (MESEFQQHHFLLHDHQH) are compositionally biased toward basic and acidic residues. Positions 1–21 (MESEFQQHHFLLHDHQHQRPR) are disordered. Ser-74 carries the post-translational modification Phosphoserine. Disordered regions lie at residues 79-98 (TFNSDGTEKKPPEVKTEDED), 133-156 (SVSRNKRPREKDDRTPVNNLARHN), and 190-286 (TSNT…MSLP). Positions 84 to 93 (GTEKKPPEVK) are enriched in basic and acidic residues. Positions 190 to 200 (TSNTEASSLTP) are enriched in polar residues. Residues Ser-213 and Ser-234 each carry the phosphoserine modification. Polar residues predominate over residues 235–261 (GGFNRSFGNEGSASSKLTALARTQSGG). A compositionally biased stretch (basic and acidic residues) spans 265–274 (YKTKDEDSAS). The region spanning 310-360 (CATHPRSIAERVRRTKISERMRKLQDLVPNMDTQTNTADMLDLAVQYIKDL) is the bHLH domain.

As to quaternary structure, homodimer.

It is found in the nucleus. This is Transcription factor bHLH122 (BHLH122) from Arabidopsis thaliana (Mouse-ear cress).